A 234-amino-acid chain; its full sequence is uncharacterized protein (234 aa).

In terms of domain architecture, ABC transporter spans 5 to 234; that stretch reads MELVDVWKIY…ERRGVVYGDT (230 aa). 41-48 is a binding site for ATP; it reads GPSGSGKS.

This sequence belongs to the ABC transporter superfamily.

This is an uncharacterized protein from Thermotoga maritima (strain ATCC 43589 / DSM 3109 / JCM 10099 / NBRC 100826 / MSB8).